The primary structure comprises 361 residues: Peptide chain release factor 1 (361 aa).

N5-methylglutamine is present on Gln-237. Residues 287–297 show a composition bias toward basic and acidic residues; the sequence is KQQKEQSDTRK. The segment at 287 to 313 is disordered; it reads KQQKEQSDTRKSLVGSGDRSERIRTYN.

The protein belongs to the prokaryotic/mitochondrial release factor family. In terms of processing, methylated by PrmC. Methylation increases the termination efficiency of RF1.

The protein resides in the cytoplasm. Functionally, peptide chain release factor 1 directs the termination of translation in response to the peptide chain termination codons UAG and UAA. The protein is Peptide chain release factor 1 of Francisella tularensis subsp. holarctica (strain FTNF002-00 / FTA).